A 467-amino-acid chain; its full sequence is Glutamate--tRNA ligase (467 aa).

A 'HIGH' region motif is present at residues 9 to 19 (PSPTGNLHIGS). The 'KMSKS' region motif lies at 237-241 (KISKR). Lysine 240 is an ATP binding site.

Belongs to the class-I aminoacyl-tRNA synthetase family. Glutamate--tRNA ligase type 1 subfamily. In terms of assembly, monomer.

The protein localises to the cytoplasm. The catalysed reaction is tRNA(Glu) + L-glutamate + ATP = L-glutamyl-tRNA(Glu) + AMP + diphosphate. Catalyzes the attachment of glutamate to tRNA(Glu) in a two-step reaction: glutamate is first activated by ATP to form Glu-AMP and then transferred to the acceptor end of tRNA(Glu). The chain is Glutamate--tRNA ligase from Buchnera aphidicola subsp. Acyrthosiphon pisum (strain APS) (Acyrthosiphon pisum symbiotic bacterium).